Reading from the N-terminus, the 182-residue chain is Transcription repressor OFP11 (182 aa).

The disordered stretch occupies residues 62-94; it reads PLHRRHSSENPAGVFSTNRREEEEEDETTTSVS. In terms of domain architecture, OVATE spans 104–169; it reads MKHIESPDPY…VSAFADTLLW (66 aa).

In terms of tissue distribution, expressed in roots, rosette and cauline leaves, shoots, stems, flower buds and siliques.

The protein resides in the nucleus. Transcriptional repressor that may regulate multiple aspects of plant growth and development through the regulation of BEL1-LIKE (BLH) and KNOX TALE (KNAT) homeodomain transcription factors. The chain is Transcription repressor OFP11 (OFP11) from Arabidopsis thaliana (Mouse-ear cress).